The following is a 423-amino-acid chain: Calcium up-regulated protein A (423 aa).

Residues 1–19 (MINIEDISKSSNESEEKQL) are compositionally biased toward basic and acidic residues. A disordered region spans residues 1–27 (MINIEDISKSSNESEEKQLKSTSTSSK). 2 consecutive Ricin B-type lectin domains span residues 27-147 (KPKY…WTTF) and 118-251 (QGNG…WGIN).

This sequence belongs to the cup family.

Its subcellular location is the cytoplasm. The protein localises to the membrane. Its function is as follows. May play an important role in stabilizing and/or regulating the cell membrane during Ca(2+) stress or certain stages of development. The polypeptide is Calcium up-regulated protein A (cupA) (Dictyostelium discoideum (Social amoeba)).